Here is a 138-residue protein sequence, read N- to C-terminus: Secreted RxLR effector protein 91 (138 aa).

The N-terminal stretch at 1 to 18 (MVIPHIICLPMALHLWTC) is a signal peptide. A RxLR motif is present at residues 34–37 (RRLR). N-linked (GlcNAc...) asparagine glycosylation is present at asparagine 93.

The protein belongs to the RxLR effector family.

Its subcellular location is the secreted. The protein localises to the host nucleus. Functionally, secreted effector that completely suppresses the host cell death induced by cell death-inducing proteins. In Plasmopara viticola (Downy mildew of grapevine), this protein is Secreted RxLR effector protein 91.